Consider the following 429-residue polypeptide: Stromal membrane-associated protein 2 (429 aa).

The region spanning Gln13 to Lys137 is the Arf-GAP domain. A C4-type zinc finger spans residues Cys28–Cys51. At Ser127 the chain carries Phosphoserine. Basic and acidic residues predominate over residues Asp138–Leu172. 2 disordered regions span residues Asp138–Lys181 and Val217–Leu263. Positions Met163–Met232 are interaction with clathrin heavy chains. A compositionally biased stretch (low complexity) spans Val217 to Ser231. Residues Ser219, Ser223, Ser225, Ser231, and Ser240 each carry the phosphoserine modification. Residues Ser253–Leu263 are compositionally biased toward basic and acidic residues. The interaction with PICALM stretch occupies residues Met340–Lys429.

Interacts with ARF1. Interacts with PICALM and clathrin heavy chains.

The protein resides in the cytoplasm. Functionally, GTPase activating protein that acts on ARF1. Can also activate ARF6 (in vitro). May play a role in clathrin-dependent retrograde transport from early endosomes to the trans-Golgi network. The polypeptide is Stromal membrane-associated protein 2 (SMAP2) (Bos taurus (Bovine)).